Reading from the N-terminus, the 878-residue chain is NUT family member 2B (878 aa).

Disordered regions lie at residues 273-324 (WSQG…DDSC), 417-512 (QKSQ…PEEI), 527-560 (LLGP…PPDP), 624-693 (PPLK…GMAR), 709-757 (LRAA…EEEE), and 775-878 (WLPQ…HCSQ). Pro residues-rich tracts occupy residues 278–288 (PLPPPPPPAAQ) and 427–444 (CLPP…PPAP). A compositionally biased stretch (basic residues) spans 476 to 487 (TKARRPPPRPHR). Residues 537-551 (EPEKQREEGKVKQPQ) are compositionally biased toward basic and acidic residues.

Belongs to the NUT family.

The chain is NUT family member 2B (NUTM2B) from Homo sapiens (Human).